A 334-amino-acid polypeptide reads, in one-letter code: 6-phosphogluconolactonase (334 aa).

Belongs to the cycloisomerase 2 family.

The catalysed reaction is 6-phospho-D-glucono-1,5-lactone + H2O = 6-phospho-D-gluconate + H(+). Its pathway is carbohydrate degradation; pentose phosphate pathway; D-ribulose 5-phosphate from D-glucose 6-phosphate (oxidative stage): step 2/3. In terms of biological role, catalyzes the hydrolysis of 6-phosphogluconolactone to 6-phosphogluconate. This Buchnera aphidicola subsp. Acyrthosiphon pisum (strain APS) (Acyrthosiphon pisum symbiotic bacterium) protein is 6-phosphogluconolactonase.